We begin with the raw amino-acid sequence, 236 residues long: MLGLYLSSLFFAFFMAQVFATKYSITFTSDEYEEDETGQNEPGPLVFHLDKNSLPPALLNQMEFNPYLVLADLPEEPRAVDSQEHTDTVLASKSVIDFLLEDPLTIVEHKKFSQIESILHEIMEDSIQKKVGADEVFEEIPKPKIYAYEDILVTNMSIINNSEMPTSTATLTSTISYLSSTTSLALSTGVTSVEIFPTITPGNITTIGGYENSSSSLMPSMGILSFLFGLYLLLHP.

The signal sequence occupies residues 1–20 (MLGLYLSSLFFAFFMAQVFA). Asn155, Asn160, Asn203, and Asn212 each carry an N-linked (GlcNAc...) asparagine glycan. Asn212 carries GPI-anchor amidated asparagine lipidation. A propeptide spans 213-236 (SSSSLMPSMGILSFLFGLYLLLHP) (removed in mature form).

Post-translationally, the GPI-anchor is attached to the protein in the endoplasmic reticulum and serves to target the protein to the cell surface. There, the glucosamine-inositol phospholipid moiety is cleaved off and the GPI-modified mannoprotein is covalently attached via its lipidless GPI glycan remnant to the 1,6-beta-glucan of the outer cell wall layer. In terms of processing, N-glycosylated.

The protein localises to the spore wall. It localises to the secreted. It is found in the cell wall. The protein resides in the membrane. The polypeptide is Sorulation-regulated protein 2 (Saccharomyces cerevisiae (strain ATCC 204508 / S288c) (Baker's yeast)).